Reading from the N-terminus, the 336-residue chain is Acetaldehyde dehydrogenase 1 (336 aa).

Residue 32–35 (SGVV) participates in NAD(+) binding. Catalysis depends on Cys-150, which acts as the Acyl-thioester intermediate. Residue Asn-309 participates in NAD(+) binding.

Belongs to the acetaldehyde dehydrogenase family.

It carries out the reaction acetaldehyde + NAD(+) + CoA = acetyl-CoA + NADH + H(+). The sequence is that of Acetaldehyde dehydrogenase 1 (mhpF) from Mycobacterium ulcerans (strain Agy99).